Here is a 206-residue protein sequence, read N- to C-terminus: Large ribosomal subunit protein uL4 (206 aa).

Residues 48–75 form a disordered region; it reads TQSAKTRAEVSGGGIKPWRQKGTGRARQ.

Belongs to the universal ribosomal protein uL4 family. Part of the 50S ribosomal subunit.

Functionally, one of the primary rRNA binding proteins, this protein initially binds near the 5'-end of the 23S rRNA. It is important during the early stages of 50S assembly. It makes multiple contacts with different domains of the 23S rRNA in the assembled 50S subunit and ribosome. Forms part of the polypeptide exit tunnel. This chain is Large ribosomal subunit protein uL4, found in Clostridium botulinum (strain Loch Maree / Type A3).